The sequence spans 255 residues: Ribonuclease HII (255 aa).

Residues 58-247 (RYIAGIDEAG…VKSMVLGARY (190 aa)) enclose the RNase H type-2 domain. A divalent metal cation is bound by residues Asp64, Glu65, and Asp156.

Belongs to the RNase HII family. Requires Mn(2+) as cofactor. It depends on Mg(2+) as a cofactor.

The protein resides in the cytoplasm. It carries out the reaction Endonucleolytic cleavage to 5'-phosphomonoester.. In terms of biological role, endonuclease that specifically degrades the RNA of RNA-DNA hybrids. The polypeptide is Ribonuclease HII (Syntrophomonas wolfei subsp. wolfei (strain DSM 2245B / Goettingen)).